The chain runs to 86 residues: Kappa-theraphotoxin-Cg1a 2 (86 aa).

The first 21 residues, 1 to 21 (MKVSVVITLAVLGVMFVWASA), serve as a signal peptide directing secretion. A propeptide spanning residues 22-50 (AELEERGSDQRDSPAWLKSMERIFQSEER) is cleaved from the precursor. 3 disulfide bridges follow: cysteine 52/cysteine 66, cysteine 59/cysteine 71, and cysteine 65/cysteine 78. Phenylalanine 84 carries the post-translational modification Phenylalanine amide.

Belongs to the neurotoxin 10 (Hwtx-1) family. 28 (Jztx-11) subfamily. As to expression, expressed by the venom gland.

It is found in the secreted. Its function is as follows. This toxin acts as a voltage-dependent gating-modifier. It inhibits the sodium conductance (IC(50)=124 nM) and slows the fast inactivation (EC(50)=1180 nM) of Nav1.5/SCN5A. It significantly shifts the activation to more depolarized voltages and decreases the deactivation of Nav1.5 currents upon extreme depolarization, but only slightly affects voltage-dependence of steady-state inactivation. In addition, this toxin causes an approximately five-fold decrease in the rate of recovery from inactivation and an approximately 1.9-fold reduction in the closed-state inactivation rate. This toxin integrates the functions of site 3 toxins (alpha-scorpion toxins) with site 4 toxins (beta-scorpion and spider toxins) by targeting multiple sites on Nav1.5. Also shows inhibition of voltage-gated potassium channels (5 uM completely inhibits Kv2.1/KCNB1, whereas 5 uM moderately inhibits Kv4.2/KCND2 Kv4.1/KCND1 channels). The chain is Kappa-theraphotoxin-Cg1a 2 from Chilobrachys guangxiensis (Chinese earth tiger tarantula).